Consider the following 335-residue polypeptide: Anthranilate phosphoribosyltransferase (335 aa).

Residues glycine 79, 82-83, threonine 87, 89-92, 107-115, and serine 119 each bind 5-phospho-alpha-D-ribose 1-diphosphate; these read GD, NIST, and KHGSRSVSS. Glycine 79 contacts anthranilate. Serine 91 provides a ligand contact to Mg(2+). Position 165 (arginine 165) interacts with anthranilate. Mg(2+) is bound by residues aspartate 223 and glutamate 224.

This sequence belongs to the anthranilate phosphoribosyltransferase family. Homodimer. Mg(2+) serves as cofactor.

The catalysed reaction is N-(5-phospho-beta-D-ribosyl)anthranilate + diphosphate = 5-phospho-alpha-D-ribose 1-diphosphate + anthranilate. It functions in the pathway amino-acid biosynthesis; L-tryptophan biosynthesis; L-tryptophan from chorismate: step 2/5. Its function is as follows. Catalyzes the transfer of the phosphoribosyl group of 5-phosphorylribose-1-pyrophosphate (PRPP) to anthranilate to yield N-(5'-phosphoribosyl)-anthranilate (PRA). This is Anthranilate phosphoribosyltransferase from Helicobacter pylori (strain Shi470).